The chain runs to 201 residues: Large ribosomal subunit protein uL4 (201 aa).

The disordered stretch occupies residues 46–71; the sequence is QKTRAEITGTGKKPWRQKGTGRARAG.

The protein belongs to the universal ribosomal protein uL4 family. As to quaternary structure, part of the 50S ribosomal subunit.

Its function is as follows. One of the primary rRNA binding proteins, this protein initially binds near the 5'-end of the 23S rRNA. It is important during the early stages of 50S assembly. It makes multiple contacts with different domains of the 23S rRNA in the assembled 50S subunit and ribosome. In terms of biological role, forms part of the polypeptide exit tunnel. The polypeptide is Large ribosomal subunit protein uL4 (Shewanella amazonensis (strain ATCC BAA-1098 / SB2B)).